The sequence spans 86 residues: Trypsin inhibitor (86 aa).

2 disulfide bridges follow: Cys8–Cys65 and Cys49–Cys58.

In terms of biological role, serine protease inhibitor which is active against trypsin. Displays strong antifungal activity against a number of phytopathogenic fungi including M.melonis, A.cucumerina, A.solani, C.glaeosporioides and P.capsici. The polypeptide is Trypsin inhibitor (Fagopyrum tataricum (Tartarian buckwheat)).